The sequence spans 205 residues: Outer-membrane lipoprotein LolB (205 aa).

Positions M1 to G17 are cleaved as a signal peptide. A lipid anchor (N-palmitoyl cysteine) is attached at C18. C18 is lipidated: S-diacylglycerol cysteine.

It belongs to the LolB family. In terms of assembly, monomer.

The protein resides in the cell outer membrane. Its function is as follows. Plays a critical role in the incorporation of lipoproteins in the outer membrane after they are released by the LolA protein. The protein is Outer-membrane lipoprotein LolB of Pseudomonas savastanoi pv. phaseolicola (strain 1448A / Race 6) (Pseudomonas syringae pv. phaseolicola (strain 1448A / Race 6)).